The sequence spans 141 residues: Small ribosomal subunit protein bS6 (141 aa).

Residues 110-141 (SRTKVSDQPAAVEAAEAPAAPAAQEESAPASA) are disordered. A compositionally biased stretch (low complexity) spans 117–141 (QPAAVEAAEAPAAPAAQEESAPASA).

The protein belongs to the bacterial ribosomal protein bS6 family.

Its function is as follows. Binds together with bS18 to 16S ribosomal RNA. This is Small ribosomal subunit protein bS6 from Acidobacterium capsulatum (strain ATCC 51196 / DSM 11244 / BCRC 80197 / JCM 7670 / NBRC 15755 / NCIMB 13165 / 161).